A 140-amino-acid polypeptide reads, in one-letter code: Large ribosomal subunit protein uL14 (140 aa).

Belongs to the universal ribosomal protein uL14 family.

The sequence is that of Large ribosomal subunit protein uL14 (RPL23) from Brugia malayi (Filarial nematode worm).